A 196-amino-acid polypeptide reads, in one-letter code: Thymidine kinase (196 aa).

An ATP-binding site is contributed by 17 to 24 (GPMFAGKT). Catalysis depends on Glu92, which acts as the Proton acceptor. Phe121 contacts substrate. Cys146 and Cys149 together coordinate Zn(2+). 166–170 (LILAG) contributes to the substrate binding site. Zn(2+) contacts are provided by Cys179 and Cys182.

Belongs to the thymidine kinase family.

The catalysed reaction is thymidine + ATP = dTMP + ADP + H(+). Its function is as follows. Phosphorylates thymidine. ASFV replicates in the cytoplasm of infected cells and contains genes encoding a number of enzymes needed for DNA synthesis, including thymidine kinase. Important for growth in swine macrophages in vitro and is a virus virulence factor in swine. In Ornithodoros (relapsing fever ticks), this protein is Thymidine kinase.